Here is a 179-residue protein sequence, read N- to C-terminus: Large ribosomal subunit protein uL5 (179 aa).

Belongs to the universal ribosomal protein uL5 family. As to quaternary structure, part of the 50S ribosomal subunit; part of the 5S rRNA/L5/L18/L25 subcomplex. Contacts the 5S rRNA and the P site tRNA. Forms a bridge to the 30S subunit in the 70S ribosome.

Its function is as follows. This is one of the proteins that bind and probably mediate the attachment of the 5S RNA into the large ribosomal subunit, where it forms part of the central protuberance. In the 70S ribosome it contacts protein S13 of the 30S subunit (bridge B1b), connecting the 2 subunits; this bridge is implicated in subunit movement. Contacts the P site tRNA; the 5S rRNA and some of its associated proteins might help stabilize positioning of ribosome-bound tRNAs. The chain is Large ribosomal subunit protein uL5 from Synechococcus elongatus (strain ATCC 33912 / PCC 7942 / FACHB-805) (Anacystis nidulans R2).